The following is a 361-amino-acid chain: Chorismate synthase (361 aa).

Residues 37–59 (TEADLQHDLDRRRPGTSRYTTQR) form a disordered region. A compositionally biased stretch (basic and acidic residues) spans 40–49 (DLQHDLDRRR). R48 and R54 together coordinate NADP(+). FMN is bound by residues 125 to 127 (RSS), 238 to 239 (NA), G278, 293 to 297 (KPTSS), and R319.

The protein belongs to the chorismate synthase family. In terms of assembly, homotetramer. Requires FMNH2 as cofactor.

It catalyses the reaction 5-O-(1-carboxyvinyl)-3-phosphoshikimate = chorismate + phosphate. Its pathway is metabolic intermediate biosynthesis; chorismate biosynthesis; chorismate from D-erythrose 4-phosphate and phosphoenolpyruvate: step 7/7. Its function is as follows. Catalyzes the anti-1,4-elimination of the C-3 phosphate and the C-6 proR hydrogen from 5-enolpyruvylshikimate-3-phosphate (EPSP) to yield chorismate, which is the branch point compound that serves as the starting substrate for the three terminal pathways of aromatic amino acid biosynthesis. This reaction introduces a second double bond into the aromatic ring system. The sequence is that of Chorismate synthase from Serratia proteamaculans (strain 568).